The primary structure comprises 188 residues: Ubiquitin-conjugating enzyme E2-21 kDa (188 aa).

The UBC core domain maps to 3 to 182 (STEKRLLKEY…VHYYIAKYSA (180 aa)). Residue Cys-119 is the Glycyl thioester intermediate of the active site.

This sequence belongs to the ubiquitin-conjugating enzyme family.

It carries out the reaction S-ubiquitinyl-[E1 ubiquitin-activating enzyme]-L-cysteine + [E2 ubiquitin-conjugating enzyme]-L-cysteine = [E1 ubiquitin-activating enzyme]-L-cysteine + S-ubiquitinyl-[E2 ubiquitin-conjugating enzyme]-L-cysteine.. The protein operates within protein modification; protein ubiquitination. Its function is as follows. Catalyzes the covalent attachment of ubiquitin to other proteins. Essential for peroxisome biogenesis. Required for UBC4-independent ubiquitination of PEX5. This is Ubiquitin-conjugating enzyme E2-21 kDa (PEX4) from Pichia angusta (Yeast).